Here is a 216-residue protein sequence, read N- to C-terminus: 1-Cys peroxiredoxin PER1 (216 aa).

The 156-residue stretch at 4 to 159 folds into the Thioredoxin domain; it reads ITLGDTVPNL…VLRALDSLLM (156 aa). Cysteine 46 acts as the Cysteine sulfenic acid (-SOH) intermediate in catalysis. The short motif at 191–214 is the Bipartite nuclear localization signal element; the sequence is KKMFPQGFKTADLPSKKGYLRHTE.

This sequence belongs to the peroxiredoxin family. Prx6 subfamily. Predominantly expressed in seed. Expressed in endosperm, embryo and aleurone cells. Also detected in young seedlings, abscission zones, stem branching points.

Its subcellular location is the nucleus. It localises to the cytoplasm. It carries out the reaction a hydroperoxide + [thioredoxin]-dithiol = an alcohol + [thioredoxin]-disulfide + H2O. Functionally, thiol-specific peroxidase that catalyzes the reduction of hydrogen peroxide and organic hydroperoxides to water and alcohols, respectively. Seems to contribute to the inhibition of germination during stress. This Arabidopsis thaliana (Mouse-ear cress) protein is 1-Cys peroxiredoxin PER1 (PER1).